A 157-amino-acid polypeptide reads, in one-letter code: Small ribosomal subunit protein uS7 (157 aa).

This sequence belongs to the universal ribosomal protein uS7 family. As to quaternary structure, part of the 30S ribosomal subunit. Contacts proteins S9 and S11.

Its function is as follows. One of the primary rRNA binding proteins, it binds directly to 16S rRNA where it nucleates assembly of the head domain of the 30S subunit. Is located at the subunit interface close to the decoding center, probably blocks exit of the E-site tRNA. The sequence is that of Small ribosomal subunit protein uS7 from Koribacter versatilis (strain Ellin345).